A 190-amino-acid chain; its full sequence is Protein LZIC (190 aa).

Residues 6 to 64 (KSETSKLRQNMEEQLDRLMQQLQDLEECREDLEEEEYEETKKETLEQLSEFNDSLKKLM) are a coiled coil.

It belongs to the CTNNBIP1 family. As to quaternary structure, does not interact with CTNNB1.

In terms of biological role, required for neuronal survival during early development. The chain is Protein LZIC (lzic) from Danio rerio (Zebrafish).